Consider the following 267-residue polypeptide: MLGRAIRSMEVMVHSSTFLLPKLHQPANSPAKKYALVVLNQNLPRFVPRLWTHAKLRICADGGANRIFDEMFQMTNDPDYESTRKRYIPEIIEGDMDSIRPEVKQFYSSQGSKISDKSHNQETTDLHKCISRIHRCTPDHEKTNLCVLVTGALGGRFDHEAANINILYLFSDMRIVLLSDDCLIRLLPKTHKHEIYIESSVEGPHCGLFPVGAPSGSTTTTGLKWNLSEAKMRFGSMISTSNIVHAEKVTVQSDADLLWTISLRNLT.

This sequence belongs to the thiamine pyrophosphokinase family.

The protein resides in the cytoplasm. Its subcellular location is the cytosol. It catalyses the reaction thiamine + ATP = thiamine diphosphate + AMP + H(+). Its pathway is cofactor biosynthesis; thiamine diphosphate biosynthesis; thiamine diphosphate from thiamine: step 1/1. Catalyzes the phosphorylation of thiamine to thiamine pyrophosphate (TPP). TPP is an active cofactor for enzymes involved in glycolysis and energy production. Plant leaves require high levels of TPP for photosynthesis and carbohydrate metabolism. This Oryza sativa subsp. japonica (Rice) protein is Thiamine pyrophosphokinase 2 (TPK2).